An 802-amino-acid polypeptide reads, in one-letter code: Elongation factor G, mitochondrial (802 aa).

A mitochondrion-targeting transit peptide spans 1–24; the sequence is MRYPSLARLPRRALSGLARAPVRL. The tr-type G domain maps to 100 to 387; it reads SRVRNIGIAA…GVIDYLPNPS (288 aa). Residues 109–116, 185–189, and 239–242 contribute to the GTP site; these read AHIDSGKT, DTPGH, and NKMD.

It belongs to the TRAFAC class translation factor GTPase superfamily. Classic translation factor GTPase family. EF-G/EF-2 subfamily.

Its subcellular location is the mitochondrion. The protein operates within protein biosynthesis; polypeptide chain elongation. In terms of biological role, mitochondrial GTPase that catalyzes the GTP-dependent ribosomal translocation step during translation elongation. During this step, the ribosome changes from the pre-translocational (PRE) to the post-translocational (POST) state as the newly formed A-site-bound peptidyl-tRNA and P-site-bound deacylated tRNA move to the P and E sites, respectively. Catalyzes the coordinated movement of the two tRNA molecules, the mRNA and conformational changes in the ribosome. The polypeptide is Elongation factor G, mitochondrial (mef1) (Aspergillus terreus (strain NIH 2624 / FGSC A1156)).